Here is a 9702-residue protein sequence, read N- to C-terminus: Nonribosomal peptide synthetase ungA (9702 aa).

The interval 248-647 (EQAQLRPHAP…ARKDTQVKIR (400 aa)) is adenylation 1. One can recognise a Carrier 1 domain in the interval 775 to 852 (APQTEMEYRL…MARAAQEKQT (78 aa)). The residue at position 812 (Ser812) is an O-(pantetheine 4'-phosphoryl)serine. Residues 891–1288 (DILPCTPLQE…EAVLRHVCSQ (398 aa)) are condensation 1. Positions 1330-1730 (QRTQQQPDAP…GRKDTQVKIR (401 aa)) are adenylation 2. The Carrier 2 domain maps to 1857-1933 (LPQSPMEKSL…RLARREIQTD (77 aa)). Ser1894 carries the O-(pantetheine 4'-phosphoryl)serine modification. The interval 1946–2374 (PFALSPIQQF…ERALEGTAVQ (429 aa)) is epimerization 1. The segment at 2414 to 2842 (EDIYPCSPLQ…LDTAILSPQD (429 aa)) is condensation 2. The adenylation 3 stretch occupies residues 2868 to 3267 (QVERQPDALA…GRKDTQVKIR (400 aa)). The Carrier 3 domain maps to 3397–3473 (APTTEMERHL…EMSQVAKLGS (77 aa)). Residue Ser3434 is modified to O-(pantetheine 4'-phosphoryl)serine. The interval 3512–3920 (EDVFPCTPLQ…LLCDASHHQS (409 aa)) is condensation 3. The segment at 3957-4361 (KQTQRRSAAQ…GRKDAQVKIR (405 aa)) is adenylation 4. One can recognise a Carrier 4 domain in the interval 4491–4568 (PPTTDLERQI…LALSVSAAVD (78 aa)). Position 4528 is an O-(pantetheine 4'-phosphoryl)serine (Ser4528). The tract at residues 4583–5013 (ALSPIQQMFA…QAAAQALPLL (431 aa)) is epimerization 2. Residues 5049 to 5474 (VEDIYPCSPL…ANIISHQDLE (426 aa)) are condensation 4. Residues 5496–5899 (MQQAESQPGA…GRKDNQVKIH (404 aa)) form an adenylation 5 region. Residues 6033-6110 (TASSPEELEL…LVSHAQGNTA (78 aa)) enclose the Carrier 5 domain. Ser6070 is modified (O-(pantetheine 4'-phosphoryl)serine). Positions 6127–6551 (ELSPIQQLFF…CKSSLEAAAA (425 aa)) are epimerization 3. Residues 6593-6935 (VEDIYPCAPI…TGISVQGGAA (343 aa)) are condensation 5. The adenylation 6 stretch occupies residues 7047 to 7447 (KRPDAPAIDA…GRRDNQVKVR (401 aa)). In terms of domain architecture, Carrier 6 spans 7575–7655 (GPQTEVERLL…RSARTVQGHV (81 aa)). Ser7613 is subject to O-(pantetheine 4'-phosphoryl)serine. The interval 7670–8106 (DLAPVQQMFA…LVTASELLMQ (437 aa)) is epimerization 4. The segment at 8144–8588 (VEDIYPCSPI…EVDLSTDHDQ (445 aa)) is condensation 6. The tract at residues 8612–9025 (NTVQKQPHST…GRKDSQVKIR (414 aa)) is adenylation 7. Residues 9158 to 9236 (SPTAPMERRL…LALLVREGDA (79 aa)) enclose the Carrier 7 domain. Ser9196 is subject to O-(pantetheine 4'-phosphoryl)serine. Residues 9282 to 9629 (DVYPTTDLQN…DNLEHDPGTA (348 aa)) form a condensation 7 region.

This sequence belongs to the NRP synthetase family.

Its pathway is secondary metabolite biosynthesis. Its function is as follows. Nonribosomal peptide synthetase; part of the gene cluster that mediates the biosynthesis of the unguisins, gamma-aminobutyric acid (GABA)-containing fungal cyclic heptapeptides with the amino acid sequence cyclo-(D-Ala1-D-Val2-L-Phe3-D-Val4-D-Ala5-D-Trp6-GABA7) for unguisin A and cyclo-(D-Ala1-D-Val2-L-Leu3-D-Val4-D-Ala5-D-Trp6-GABA7) for unguisin B. UngA is the main enzyme within the cluster which condenses the 7 residues using its respective 7 modules. The terminal condensation domain (Ct) is involved in cyclization with D-alanine and thereby releasing of unguisins A and B. The alanine racemase ungC provides D-alanine, which is then accepted by the first adenylation domain of ungA. Finally, the hydrolase ungD catalyzes the hydrolysis between the D-tryptophan and GABA residues of unguisins A and B to produce the corresponding linear peptides. In Aspergillus violaceofuscus (strain CBS 115571), this protein is Nonribosomal peptide synthetase ungA.